We begin with the raw amino-acid sequence, 367 residues long: Glutamate 5-kinase (367 aa).

Lysine 10 serves as a coordination point for ATP. Serine 50, aspartate 137, and asparagine 149 together coordinate substrate. ATP contacts are provided by residues 169-170 and 211-217; these read TD and TGGMGTK. A PUA domain is found at 275–353; the sequence is AGEITVDDGA…QEISEILGYE (79 aa).

This sequence belongs to the glutamate 5-kinase family.

The protein resides in the cytoplasm. It catalyses the reaction L-glutamate + ATP = L-glutamyl 5-phosphate + ADP. Its pathway is amino-acid biosynthesis; L-proline biosynthesis; L-glutamate 5-semialdehyde from L-glutamate: step 1/2. Its function is as follows. Catalyzes the transfer of a phosphate group to glutamate to form L-glutamate 5-phosphate. The protein is Glutamate 5-kinase of Serratia proteamaculans (strain 568).